A 1390-amino-acid chain; its full sequence is MSNEDVAEDVSQVTDFHFHTCRKFRLFSSKSDGYSQNEINIRNRVATSSQLGVTFVTVNSNQLSCFHTKSLLGYKITRENMNVEVTDLPIKTIRLHGVVLINDMGVNSDGTVLGVLHTKNNDVSVDVFDIKKICTSSSIEPFKPLCTTRVGTEQINQGSCLEWNPAFPDTFAASSTDRSILVAKINVQSPANQKLVGIGKFGAVTTAISWSPKGKQLTIGDSLGKIVQLKPELEVVRSQHGPENKPNYGRITGLCWLATTEWLVSLENGTDQDAYLMRCKKDKPTEWIQFHELSYSSSKWPLPPQLFPATQLLVDWNVVIVGNSKTSEISTVGKRDDWQTWVPVEGESIYLPTTSSGKDTVPIGVAVDRSMTDEVLLNPDGSQRHRPSPLVLCLTNDGILTAHHIISTFAAHIPCQMSSQNLAINDLKKLQFDSQKPISAPPSDQTPVTKPSTVFGQKPEAETLKSSLVGSPSSVQTPKPSSSLFNPKSIASNIETSQLTESKPSTPAAPSSQPKIASTPKSEAIPKISDKTLEHKKAELIATKKQVLIERMDKINDSMAGAKDATMKLSFAVGKVKTTIMECADVVRASLGDSKEVMDELKNLILSIERMSDRTQHTVKEMDFEIDEKMELVAGVEDGNQVLEKLRNMSETEKLMRFNKLETAADLLNGKYEECSDLIKKLRMSLSEKESLRKQAILSPLRLSSNLNQLRSGSETELALKVMRNVSKIIMDTREQIQRTELEFVRFQRDVKFQNFKKGKENLNFTQPLEMSSLDGDAPQGKSLTDAESIKVRQALVNQIQKRGIVKTRNVIVESYKKSENSAAMKNDLLDTSNLSNAILKLSMTPRRVMPSSSLFSASPSTPSTKSDAATQADEPPIVKTVVVTVESPAKPIASAPAVSSPLIKLNTTTATTTMTTPKVTVPKEEANKTQDQKPIISTPASSSIFSSGSLFGTKTQTPLVSKEESTLTTGVPSLINSSLSISPQEIEKASSKVETLNKTEEVKDEKSENEVTPDLKSEEPKSLETKVKEEPKPAVQTPVKEEETGSNIQKTPSFSFNSTTTPKSTSSTSSIFGGGLKTQTPSSSNSTNIFGARTTTTATPTPASNTSSIFGGGSKAASSPFGSFGQAGCQPAKTSNPATSTASVTFSFNTGATSASAKPAGFGSFGAGASAKPSSVFGGSVTAPTVPNVDDGMEDDSMANGGGSGGFMSGLGNARTSNTSGGNNPFAPKTSTGTSASSSSWLFGGGGNQQQQQQQKPSFSFNTAGSSAQQASAPATGTSSVFGGAPKFGSQPAFGAKPFGGGANAGLSKNASIFGGATSSTTNNPATGGFAQFASGQKTSSLFGGGATPQTNTSIFGGGANTTPAPTSSVFGGGASANANKPTSFTSWR.

Composition is skewed to polar residues over residues 434–455 and 464–521; these read SQKPISAPPSDQTPVTKPSTVF and LKSS…STPK. Disordered regions lie at residues 434 to 530, 851 to 874, and 985 to 1118; these read SQKP…KISD, PSSSLFSASPSTPSTKSDAATQAD, and QEIE…SKAA. The span at 851–864 shows a compositional bias: low complexity; the sequence is PSSSLFSASPSTPS. The span at 986–1033 shows a compositional bias: basic and acidic residues; the sequence is EIEKASSKVETLNKTEEVKDEKSENEVTPDLKSEEPKSLETKVKEEPK. The span at 1051–1071 shows a compositional bias: low complexity; the sequence is KTPSFSFNSTTTPKSTSSTSS. Repeat unit 1 spans residues 1073-1074; sequence FG. Positions 1073–1373 are 17 X 2 AA repeats of F-G; the sequence is FGGGLKTQTP…TPAPTSSVFG (301 aa). Positions 1078 to 1090 are enriched in polar residues; that stretch reads KTQTPSSSNSTNI. Residues 1091–1092 form repeat 2; the sequence is FG. Positions 1095–1109 are enriched in low complexity; that stretch reads TTTTATPTPASNTSS. 6 consecutive repeat copies span residues 1111-1112, 1122-1123, 1125-1126, 1163-1164, 1166-1167, and 1178-1179. The disordered stretch occupies residues 1183 to 1280; that stretch reads TAPTVPNVDD…QASAPATGTS (98 aa). Gly residues predominate over residues 1201–1210; that stretch reads NGGGSGGFMS. Residues 1231–1243 are compositionally biased toward low complexity; that stretch reads TSTGTSASSSSWL. Repeat 9 spans residues 1244–1245; sequence FG. Positions 1264-1280 are enriched in low complexity; sequence TAGSSAQQASAPATGTS. 8 repeat units span residues 1283–1284, 1289–1290, 1295–1296, 1300–1301, 1315–1316, 1344–1345, 1357–1358, and 1372–1373. The segment covering 1342 to 1371 has biased composition (polar residues); the sequence is SLFGGGATPQTNTSIFGGGANTTPAPTSSV. The segment at 1342 to 1390 is disordered; it reads SLFGGGATPQTNTSIFGGGANTTPAPTSSVFGGGASANANKPTSFTSWR. Positions 1378 to 1390 are enriched in polar residues; it reads ANANKPTSFTSWR.

As to quaternary structure, interacts with caspase ced-3 (via propeptide); the interaction tethers ced-3 to the nuclear membrane and prevents its autoprocessing in absence of ced-4.

Its subcellular location is the nucleus. The protein localises to the nuclear pore complex. It localises to the nucleus membrane. Its function is as follows. May serve as a docking site in the receptor-mediated import of substrates across the nuclear pore complex. Plays a role in apoptosis by tethering caspase ced-3 to the nuclear membrane preventing its autoprocessing in absence of ced-4. This chain is Nuclear pore complex protein 14, found in Caenorhabditis elegans.